The primary structure comprises 887 residues: Alanine--tRNA ligase (887 aa).

Zn(2+)-binding residues include H564, H568, C676, and H680.

This sequence belongs to the class-II aminoacyl-tRNA synthetase family. The cofactor is Zn(2+).

Its subcellular location is the cytoplasm. The enzyme catalyses tRNA(Ala) + L-alanine + ATP = L-alanyl-tRNA(Ala) + AMP + diphosphate. Functionally, catalyzes the attachment of alanine to tRNA(Ala) in a two-step reaction: alanine is first activated by ATP to form Ala-AMP and then transferred to the acceptor end of tRNA(Ala). Also edits incorrectly charged Ser-tRNA(Ala) and Gly-tRNA(Ala) via its editing domain. The sequence is that of Alanine--tRNA ligase from Sinorhizobium medicae (strain WSM419) (Ensifer medicae).